Here is an 865-residue protein sequence, read N- to C-terminus: cGMP-specific 3',5'-cyclic phosphodiesterase (865 aa).

Ser92 bears the Phosphoserine mark. GAF domains lie at 154–304 (DVTA…GIVL) and 336–493 (SLEV…GLGI). The 325-residue stretch at 526-850 (ETRELQALSA…QKWQALAEQQ (325 aa)) folds into the PDEase domain. Catalysis depends on His603, which acts as the Proton donor. His607, His643, Asp644, and Asp754 together coordinate Zn(2+). Residue Asp644 coordinates Mg(2+). Gln807 serves as a coordination point for 3',5'-cyclic GMP.

This sequence belongs to the cyclic nucleotide phosphodiesterase family. Requires Zn(2+) as cofactor. It depends on Mg(2+) as a cofactor. Phosphorylation is regulated by binding of cGMP to the two allosteric sites. Phosphorylation by PRKG1 leads to its activation.

It catalyses the reaction 3',5'-cyclic GMP + H2O = GMP + H(+). Its pathway is purine metabolism; 3',5'-cyclic GMP degradation; GMP from 3',5'-cyclic GMP: step 1/1. Functionally, plays a role in signal transduction by regulating the intracellular concentration of cyclic nucleotides. This phosphodiesterase catalyzes the specific hydrolysis of cGMP to 5'-GMP. Specifically regulates nitric-oxide-generated cGMP. In Mus musculus (Mouse), this protein is cGMP-specific 3',5'-cyclic phosphodiesterase (Pde5a).